The primary structure comprises 449 residues: Trigger factor (449 aa).

The PPIase FKBP-type domain occupies 172–257 (GDEVRFDFKG…IKEITNVKPQ (86 aa)).

The protein belongs to the FKBP-type PPIase family. Tig subfamily.

It is found in the cytoplasm. It catalyses the reaction [protein]-peptidylproline (omega=180) = [protein]-peptidylproline (omega=0). Involved in protein export. Acts as a chaperone by maintaining the newly synthesized protein in an open conformation. Functions as a peptidyl-prolyl cis-trans isomerase. This is Trigger factor from Ureaplasma parvum serovar 3 (strain ATCC 27815 / 27 / NCTC 11736).